The chain runs to 328 residues: Dihydroorotate dehydrogenase (quinone), mitochondrial (328 aa).

A helical membrane pass occupies residues 21–38 (AHGLSIAGLKTGLVTGSA). FMN contacts are provided by residues 61–65 (AGYDK) and threonine 85. Lysine 65 contributes to the substrate binding site. 110–114 (NRLGF) is a substrate binding site. Residues asparagine 139 and asparagine 170 each coordinate FMN. 170 to 175 (NISSPN) is a substrate binding site. Serine 173 acts as the Nucleophile in catalysis. Residues lysine 215 and serine 243 each coordinate FMN. 244 to 245 (NT) serves as a coordination point for substrate. Glycine 266 and glycine 295 together coordinate FMN.

Belongs to the dihydroorotate dehydrogenase family. Type 2 subfamily. FMN serves as cofactor.

Its subcellular location is the mitochondrion inner membrane. The catalysed reaction is (S)-dihydroorotate + a quinone = orotate + a quinol. It participates in pyrimidine metabolism; UMP biosynthesis via de novo pathway; orotate from (S)-dihydroorotate (quinone route): step 1/1. Catalyzes the conversion of dihydroorotate to orotate with quinone as electron acceptor. In Cyclocybe aegerita (Black poplar mushroom), this protein is Dihydroorotate dehydrogenase (quinone), mitochondrial (URA1).